We begin with the raw amino-acid sequence, 212 residues long: Uridine kinase (212 aa).

13–20 (GASASGKS) contributes to the ATP binding site.

The protein belongs to the uridine kinase family.

The protein resides in the cytoplasm. It catalyses the reaction uridine + ATP = UMP + ADP + H(+). It carries out the reaction cytidine + ATP = CMP + ADP + H(+). It functions in the pathway pyrimidine metabolism; CTP biosynthesis via salvage pathway; CTP from cytidine: step 1/3. It participates in pyrimidine metabolism; UMP biosynthesis via salvage pathway; UMP from uridine: step 1/1. The chain is Uridine kinase from Shewanella denitrificans (strain OS217 / ATCC BAA-1090 / DSM 15013).